A 20-amino-acid chain; its full sequence is Transcriptional regulatory protein PufK (20 aa).

Residues 1–11 (MVPYRNPRHQH) show a composition bias toward basic residues. Residues 1–20 (MVPYRNPRHQHVASVLRSGG) form a disordered region.

Its function is as follows. Involved in the transcriptional regulation of pufB. The polypeptide is Transcriptional regulatory protein PufK (pufK) (Cereibacter sphaeroides (strain ATCC 17023 / DSM 158 / JCM 6121 / CCUG 31486 / LMG 2827 / NBRC 12203 / NCIMB 8253 / ATH 2.4.1.) (Rhodobacter sphaeroides)).